Reading from the N-terminus, the 328-residue chain is MDLNTILIIVGIVALVALIVHGLWSNRREKSKYFDKANKFDRTSLTSRSHTQEEMAQPNNISPNTYVENGHTPIPQPTTEKVPSEAELIDYRQSDKSVDDIKISIPNTQPIYDMGNHRSEPIQPTQPQYDMPTANNVASMTLEQLEEQSRNIGFNGINSSSPELRVQLAELSHEEHQVDYNLSFNEPKAETTAQPKQTTGYIQLYLIPKSSEEFNGAKLVQALENLGFILGKDEMYHRHLDLSVASPVLFSVANLEQPGTFNAYNLAEFNTIGIVFFMQLPSPGNNLANLRMMMRAAHTLAEDLQGVILTEEQEIFDANAEQAYLARV.

Residues 1-4 (MDLN) are Periplasmic-facing. The helical transmembrane segment at 5 to 25 (TILIIVGIVALVALIVHGLWS) threads the bilayer. The Cytoplasmic segment spans residues 26-328 (NRREKSKYFD…NAEQAYLARV (303 aa)). The segment at 43–82 (TSLTSRSHTQEEMAQPNNISPNTYVENGHTPIPQPTTEKV) is disordered. A compositionally biased stretch (polar residues) spans 57 to 67 (QPNNISPNTYV).

It belongs to the ZipA family. Interacts with FtsZ via their C-terminal domains.

The protein localises to the cell inner membrane. Its function is as follows. Essential cell division protein that stabilizes the FtsZ protofilaments by cross-linking them and that serves as a cytoplasmic membrane anchor for the Z ring. Also required for the recruitment to the septal ring of downstream cell division proteins. This is Cell division protein ZipA from Haemophilus influenzae (strain PittEE).